The primary structure comprises 41 residues: Plantazolicin (41 aa).

Residues 1 to 27 (MTKITIPTALSAKVHGEGQHLFEPMAA) constitute a propeptide that is removed on maturation. Arginine 28 carries the post-translational modification N2,N2-dimethylarginine; in form plantazolicin A. Positions 28-29 (RC) form a cross-link, thiazole-4-carboxylic acid (Arg-Cys). Cross-links (5-methyloxazole-4-carboxylic acid (Cys-Thr)) lie at residues 29-30 (CT) and 31-32 (CT). A cross-link (thiazole-4-carboxylic acid (Thr-Cys)) is located at residues 30-31 (TC). The 5-methyloxazole-4-carboxylic acid (Thr-Thr) cross-link spans 32 to 33 (TT). The oxazole-4-carboxylic acid (Ile-Ser) cross-link spans 35-36 (IS). 3 consecutive cross-links (oxazole-4-carboxylic acid (Ser-Ser)) follow at residues 36–37 (SS), 37–38 (SS), and 38–39 (SS). A cross-link (5-methyloxazoline-4-carboxylic acid (Ser-Thr)) is located at residues 39–40 (ST).

Maturation of thiazole and oxazole containing antibiotics involves the enzymatic condensation of a Cys, Ser or Thr with the alpha-carbonyl of the preceding amino acid to form a thioether or ether bond, then dehydration to form a double bond with the alpha-amino nitrogen. Thiazoline or oxazoline ring are dehydrogenated to form thiazole or oxazole rings.

Its subcellular location is the secreted. The protein resides in the cell wall. Functionally, peptide antibiotic inhibiting growth of Gram-positive bacteria. The mode of action appears to be disruption of cell walls and lysis of cells. This is Plantazolicin from Bacillus pumilus (strain ATCC 7061 / DSM 27 / CCUG 26015 / JCM 2508 / NBRC 12092 / NCIMB 9369 / NCTC 10337 / NRRL NRS-272 / CCM 2144).